The following is an 88-amino-acid chain: MASFLSFLLGEKKKTASVAKERLQIILAHERNGRNASEPDYLPALQRELVAVISKYVKISPEDLKVQLERQDNLEVLEVKIELPDTVR.

The protein belongs to the MinE family.

Functionally, prevents the cell division inhibition by proteins MinC and MinD at internal division sites while permitting inhibition at polar sites. This ensures cell division at the proper site by restricting the formation of a division septum at the midpoint of the long axis of the cell. In Paracidovorax citrulli (strain AAC00-1) (Acidovorax citrulli), this protein is Cell division topological specificity factor.